Here is a 70-residue protein sequence, read N- to C-terminus: Small ribosomal subunit protein bS21 (70 aa).

This sequence belongs to the bacterial ribosomal protein bS21 family.

The polypeptide is Small ribosomal subunit protein bS21 (Azoarcus sp. (strain BH72)).